The following is a 347-amino-acid chain: Protein RecA (347 aa).

An ATP-binding site is contributed by 67 to 74; sequence GPESSGKT. Residues 327-347 are disordered; it reads ALGLSSPTPKENGKEKGKAKP. Over residues 337 to 347 the composition is skewed to basic and acidic residues; sequence ENGKEKGKAKP.

Belongs to the RecA family.

The protein resides in the cytoplasm. In terms of biological role, can catalyze the hydrolysis of ATP in the presence of single-stranded DNA, the ATP-dependent uptake of single-stranded DNA by duplex DNA, and the ATP-dependent hybridization of homologous single-stranded DNAs. It interacts with LexA causing its activation and leading to its autocatalytic cleavage. In Desulforapulum autotrophicum (strain ATCC 43914 / DSM 3382 / VKM B-1955 / HRM2) (Desulfobacterium autotrophicum), this protein is Protein RecA.